Reading from the N-terminus, the 571-residue chain is uncharacterized protein (571 aa).

Disordered regions lie at residues 71–128 (TNHY…RVTA), 142–258 (NKND…PQNE), and 298–336 (LNRQ…TTKR). Over residues 88 to 113 (PNRSGVSSPVNDGASSPTQRGGTTPA) the composition is skewed to polar residues. The segment covering 168–184 (RGYPGPGPRGYPGPGPR) has biased composition (pro residues). Residues 205–215 (QGPRRYSCPGP) show a composition bias toward low complexity. Residues 217-234 (GYPGPGSSGRPDPGGGLQ) show a composition bias toward gly residues. Positions 311 to 326 (PEKQQTPPPEETQNAQ) are enriched in low complexity.

This is an uncharacterized protein from Drosophila melanogaster (Fruit fly).